Here is a 201-residue protein sequence, read N- to C-terminus: Small ribosomal subunit protein uS4 (201 aa).

In terms of domain architecture, S4 RNA-binding spans 91–151; sequence SRLDNVVYRA…EKSQKMNWFE (61 aa).

It belongs to the universal ribosomal protein uS4 family. In terms of assembly, part of the 30S ribosomal subunit. Contacts protein S5. The interaction surface between S4 and S5 is involved in control of translational fidelity.

Functionally, one of the primary rRNA binding proteins, it binds directly to 16S rRNA where it nucleates assembly of the body of the 30S subunit. In terms of biological role, with S5 and S12 plays an important role in translational accuracy. In Corynebacterium glutamicum (strain R), this protein is Small ribosomal subunit protein uS4.